Here is a 206-residue protein sequence, read N- to C-terminus: uncharacterized protein (206 aa).

Residues 14 to 200 (QRLINQAVEI…TPVVVREGVG (187 aa)) enclose the YrdC-like domain.

The protein belongs to the SUA5 family.

This is an uncharacterized protein from Escherichia coli O6:H1 (strain CFT073 / ATCC 700928 / UPEC).